The primary structure comprises 80 residues: Myrmicitoxin(1)-Pr1a (80 aa).

A signal peptide spans 1–23 (MEIPKLLYIAVIAIGLSGSLTWA). A propeptide spanning residues 24–57 (TPLANPLAEAEAEAKATAEATAEALAEALAEPEP) is cleaved from the precursor. Residue F79 is modified to Phenylalanine amide.

Belongs to the formicidae venom clade 1 family. Expressed by the venom gland.

The protein resides in the secreted. Its function is as follows. Vertebrate-selective toxin that causes pain by targeting voltage-gated sodium channels. This chain is Myrmicitoxin(1)-Pr1a, found in Pogonomyrmex rugosus (Desert harvester ant).